The sequence spans 530 residues: AA9 family lytic polysaccharide monooxygenase C (530 aa).

The N-terminal stretch at 1-18 (MQLKSTVHFLSLLAYTAA) is a signal peptide. Histidine 19 and histidine 103 together coordinate Cu(2+). 2 disulfides stabilise this stretch: cysteine 72–cysteine 190 and cysteine 114–cysteine 118. An N-linked (GlcNAc...) asparagine glycan is attached at asparagine 150. Residue glutamine 185 coordinates O2. Tyrosine 187 contacts Cu(2+). The span at 238-251 (YGSGSSSSQNSVES) shows a compositional bias: low complexity. 4 disordered regions span residues 238 to 279 (YGSG…STSA), 297 to 329 (ESSS…SSSA), 348 to 375 (YSSA…KLSS), and 492 to 512 (GNGA…GTTP). A compositionally biased stretch (basic and acidic residues) spans 312-324 (KSVEAKETTKVEE). The span at 348–368 (YSSASPSSSPVLSSSKPASTS) shows a compositional bias: low complexity.

Belongs to the polysaccharide monooxygenase AA9 family. The cofactor is Cu(2+).

It is found in the secreted. The enzyme catalyses [(1-&gt;4)-beta-D-glucosyl]n+m + reduced acceptor + O2 = 4-dehydro-beta-D-glucosyl-[(1-&gt;4)-beta-D-glucosyl]n-1 + [(1-&gt;4)-beta-D-glucosyl]m + acceptor + H2O.. Lytic polysaccharide monooxygenase (LPMO) that depolymerizes polysaccharides via the oxidation of scissile alpha- or beta-(1-4)-glycosidic bonds, yielding C1 or C4 oxidation products. Catalysis by LPMOs requires the reduction of the active-site copper from Cu(II) to Cu(I) by a reducing agent and H(2)O(2) or O(2) as a cosubstrate. Amorphous cellulose is not a suitable substrate for LPMO9C, which may act at the surface of cellulose microfibrils without any release of soluble products. The polypeptide is AA9 family lytic polysaccharide monooxygenase C (Geotrichum candidum (Oospora lactis)).